Here is a 209-residue protein sequence, read N- to C-terminus: uncharacterized protein (209 aa).

This is an uncharacterized protein from Escherichia coli (strain K12).